A 481-amino-acid chain; its full sequence is N-succinylglutamate 5-semialdehyde dehydrogenase (481 aa).

206-211 (GSARTG) lines the NAD(+) pocket. Active-site residues include glutamate 229 and cysteine 263.

The protein belongs to the aldehyde dehydrogenase family. AstD subfamily.

The catalysed reaction is N-succinyl-L-glutamate 5-semialdehyde + NAD(+) + H2O = N-succinyl-L-glutamate + NADH + 2 H(+). The protein operates within amino-acid degradation; L-arginine degradation via AST pathway; L-glutamate and succinate from L-arginine: step 4/5. In terms of biological role, catalyzes the NAD-dependent reduction of succinylglutamate semialdehyde into succinylglutamate. The sequence is that of N-succinylglutamate 5-semialdehyde dehydrogenase from Sphingopyxis alaskensis (strain DSM 13593 / LMG 18877 / RB2256) (Sphingomonas alaskensis).